The chain runs to 568 residues: uncharacterized protein (568 aa).

The span at 334–346 (DDNEEKNNDRPKI) shows a compositional bias: basic and acidic residues. Disordered stretches follow at residues 334–382 (DDNE…NDQN) and 436–479 (QVEE…SCKN). Residues 458–477 (KIASSASKNDNSNNKNSKSC) are compositionally biased toward low complexity.

This sequence to yeast YJL043w.

This is an uncharacterized protein from Saccharomyces cerevisiae (strain ATCC 204508 / S288c) (Baker's yeast).